A 303-amino-acid chain; its full sequence is Albumin b-32 (303 aa).

Positions 112–137 (ATPTSSATTPGGSASAAGTRTSSATR) are enriched in low complexity. The segment at 112–175 (ATPTSSATTP…GGGGADADAD (64 aa)) is disordered. Over residues 146-156 (ARDDQGRQRPG) the composition is skewed to basic and acidic residues.

It belongs to the ribosome-inactivating protein family. Type 1 RIP subfamily. Monomer. Endosperm.

It localises to the cytoplasm. It catalyses the reaction Endohydrolysis of the N-glycosidic bond at one specific adenosine on the 28S rRNA.. A possible regulatory factor for the synthesis of zeins, the major group of storage proteins. This chain is Albumin b-32 (O6), found in Zea mays (Maize).